The following is a 359-amino-acid chain: S-adenosylmethionine:tRNA ribosyltransferase-isomerase (359 aa).

The protein belongs to the QueA family. As to quaternary structure, monomer.

Its subcellular location is the cytoplasm. It carries out the reaction 7-aminomethyl-7-carbaguanosine(34) in tRNA + S-adenosyl-L-methionine = epoxyqueuosine(34) in tRNA + adenine + L-methionine + 2 H(+). It functions in the pathway tRNA modification; tRNA-queuosine biosynthesis. In terms of biological role, transfers and isomerizes the ribose moiety from AdoMet to the 7-aminomethyl group of 7-deazaguanine (preQ1-tRNA) to give epoxyqueuosine (oQ-tRNA). The protein is S-adenosylmethionine:tRNA ribosyltransferase-isomerase of Ralstonia pickettii (strain 12J).